A 292-amino-acid chain; its full sequence is 2-methylisocitrate lyase (292 aa).

44 to 46 is a substrate binding site; the sequence is SGA. Asp-84 and Asp-86 together coordinate Mg(2+). Substrate contacts are provided by residues 121–122, Arg-156, Glu-186, 208–210, Arg-239, and Arg-268; these read CG and NMT.

Belongs to the isocitrate lyase/PEP mutase superfamily. Methylisocitrate lyase family. In terms of assembly, homotetramer; dimer of dimers. Requires Mg(2+) as cofactor.

The catalysed reaction is (2S,3R)-3-hydroxybutane-1,2,3-tricarboxylate = pyruvate + succinate. It functions in the pathway organic acid metabolism; propanoate degradation. Involved in the catabolism of short chain fatty acids (SCFA) via the 2-methylcitrate cycle I (propionate degradation route). Catalyzes the thermodynamically favored C-C bond cleavage of (2R,3S)-2-methylisocitrate to yield pyruvate and succinate via an alpha-carboxy-carbanion intermediate. This is 2-methylisocitrate lyase from Shewanella oneidensis (strain ATCC 700550 / JCM 31522 / CIP 106686 / LMG 19005 / NCIMB 14063 / MR-1).